We begin with the raw amino-acid sequence, 319 residues long: Aspartate carbamoyltransferase catalytic subunit (319 aa).

Carbamoyl phosphate is bound by residues Arg65 and Thr66. Lys93 contacts L-aspartate. Carbamoyl phosphate is bound by residues Arg115, His143, and Gln146. Positions 176 and 230 each coordinate L-aspartate. Carbamoyl phosphate contacts are provided by Gly271 and Pro272.

It belongs to the aspartate/ornithine carbamoyltransferase superfamily. ATCase family. In terms of assembly, heterododecamer (2C3:3R2) of six catalytic PyrB chains organized as two trimers (C3), and six regulatory PyrI chains organized as three dimers (R2).

It carries out the reaction carbamoyl phosphate + L-aspartate = N-carbamoyl-L-aspartate + phosphate + H(+). It functions in the pathway pyrimidine metabolism; UMP biosynthesis via de novo pathway; (S)-dihydroorotate from bicarbonate: step 2/3. Catalyzes the condensation of carbamoyl phosphate and aspartate to form carbamoyl aspartate and inorganic phosphate, the committed step in the de novo pyrimidine nucleotide biosynthesis pathway. The sequence is that of Aspartate carbamoyltransferase catalytic subunit from Chelativorans sp. (strain BNC1).